The chain runs to 83 residues: Small ribosomal subunit protein bS20 (83 aa).

Residues 1 to 11 are compositionally biased toward basic residues; sequence MANHKSAAKRA. Positions 1 to 44 are disordered; it reads MANHKSAAKRAKQSEARRLRNKSTRSSMNTAVKKVRTAKEAGTD.

This sequence belongs to the bacterial ribosomal protein bS20 family.

Functionally, binds directly to 16S ribosomal RNA. In Desulforapulum autotrophicum (strain ATCC 43914 / DSM 3382 / VKM B-1955 / HRM2) (Desulfobacterium autotrophicum), this protein is Small ribosomal subunit protein bS20.